The following is a 210-amino-acid chain: MIPAEQIATDLLTIGAVTLAPNHPFLWASGMQAPIYTDNRRTIAFPQVRTHIADGLASLIKHRYPTATVISGVATAGITHAALVADRLNLPMSYVRAKPKDHGKGKQIEGQMTASDQVVLIDDLISTGGSVLAAAKAVRKAGATVLGVVAIFSYELPDSVVNFQQAGLALTPLTTYSTLITVAQQQAKITAPEMASLRQWREDPWGWVSV.

5-phospho-alpha-D-ribose 1-diphosphate is bound by residues arginine 96, lysine 100, histidine 102, and 122-130 (DDLISTGGS). An orotate-binding site is contributed by serine 126.

The protein belongs to the purine/pyrimidine phosphoribosyltransferase family. PyrE subfamily. In terms of assembly, homodimer. It depends on Mg(2+) as a cofactor.

It carries out the reaction orotidine 5'-phosphate + diphosphate = orotate + 5-phospho-alpha-D-ribose 1-diphosphate. It participates in pyrimidine metabolism; UMP biosynthesis via de novo pathway; UMP from orotate: step 1/2. Functionally, catalyzes the transfer of a ribosyl phosphate group from 5-phosphoribose 1-diphosphate to orotate, leading to the formation of orotidine monophosphate (OMP). This Levilactobacillus brevis (strain ATCC 367 / BCRC 12310 / CIP 105137 / JCM 1170 / LMG 11437 / NCIMB 947 / NCTC 947) (Lactobacillus brevis) protein is Orotate phosphoribosyltransferase.